Here is a 267-residue protein sequence, read N- to C-terminus: Probable ribosomal RNA small subunit methyltransferase A (267 aa).

S-adenosyl-L-methionine contacts are provided by Leu-12, Gly-37, Glu-58, Asp-83, and Asn-100.

Belongs to the class I-like SAM-binding methyltransferase superfamily. rRNA adenine N(6)-methyltransferase family. RsmA subfamily.

Its subcellular location is the cytoplasm. Specifically dimethylates two adjacent adenosines in the loop of a conserved hairpin near the 3'-end of 16S rRNA in the 30S particle. May play a critical role in biogenesis of 30S subunits. The polypeptide is Probable ribosomal RNA small subunit methyltransferase A (Methanococcus maripaludis (strain DSM 14266 / JCM 13030 / NBRC 101832 / S2 / LL)).